The following is a 189-amino-acid chain: Ras-like protein 1 (189 aa).

10–17 (GAGGVGKS) contacts GTP. Positions 32–40 (YDPTIEDSY) match the Effector region motif. Residues 57–61 (DTAGQ) and 116–119 (NKCD) contribute to the GTP site. C186 is subject to Cysteine methyl ester. C186 carries the S-geranylgeranyl cysteine lipid modification. Positions 187–189 (KML) are cleaved as a propeptide — removed in mature form.

Belongs to the small GTPase superfamily. Ras family.

It localises to the cell membrane. The enzyme catalyses GTP + H2O = GDP + phosphate + H(+). Its activity is regulated as follows. Alternates between an inactive form bound to GDP and an active form bound to GTP. Activated by a guanine nucleotide-exchange factor (GEF) and inactivated by a GTPase-activating protein (GAP). Functionally, ras proteins bind GDP/GTP and possess intrinsic GTPase activity. Plays a role in eye development by regulating cell growth, survival of postmitotic ommatidial cells and differentiation of photoreceptor cells. During larval development, mediates Ptth/tor signaling leading to the production of ecdysone, a hormone required for the initiation of metamorphosis. This is Ras-like protein 1 from Drosophila willistoni (Fruit fly).